A 285-amino-acid polypeptide reads, in one-letter code: Phasyl DNA replicon protein arp (285 aa).

Functionally, essential for autonomous replication of the phasyl DNA replicon. The polypeptide is Phasyl DNA replicon protein arp (arp) (Escherichia coli).